A 595-amino-acid chain; its full sequence is MNVRNFSIIAHVDHGKSTLADRILERLGAMGERDKRDQTLDTLELERERGITIKSTPIRLTYRRANGEEYTFNLIDTPGHVDFGYEVSRSLAACEGVLLLVDASQGVEAQTIVNAYLAIDNNLEIIPVVNKIDLPAADPEGAAQELEEVIGIPAEEAVFASGKTGQGVDQILEAIVERIPPPPGDPQAPLKALIFDSFYDAYQGVILFVRVLEGTLKPKQKIMLFSNGKSFEVDKVGTFSPGLVVGDALSAGAVGWVAASIKDIHDAQVGDTITEKDRPTAEPFPGFKPAQPVVFSGLYPTDTEDYRKLREALEKLKLNDAAFTFEPETSEALGFGFRCGFLGLLHAEIVQERLEREFDLDLIATAPAVVYRVTLTNGEVFETQNPAEFPTRDRIARVEEPYIKLSIMLPEEYVGPVMQLLQERRGNMVTMNYVGKRVELIYEVPFAEILYDFHDRLKSISRGYASMDYEQIGYREGDLRKVDILVNGEVVDALAVIVHEDKAYSLGRKIVDKMAEVIPRQLFPVPVQAAIGGKIIARATVKAYRKDVLAKCYGGDITRKKKLLEKQKKGRARMKQIGTVEVPQEAFLAVLSTEE.

Residues 1–183 (MNVRNFSIIA…AIVERIPPPP (183 aa)) form the tr-type G domain. GTP-binding positions include 13 to 18 (DHGKST) and 130 to 133 (NKID).

This sequence belongs to the TRAFAC class translation factor GTPase superfamily. Classic translation factor GTPase family. LepA subfamily.

The protein resides in the cell membrane. The catalysed reaction is GTP + H2O = GDP + phosphate + H(+). In terms of biological role, required for accurate and efficient protein synthesis under certain stress conditions. May act as a fidelity factor of the translation reaction, by catalyzing a one-codon backward translocation of tRNAs on improperly translocated ribosomes. Back-translocation proceeds from a post-translocation (POST) complex to a pre-translocation (PRE) complex, thus giving elongation factor G a second chance to translocate the tRNAs correctly. Binds to ribosomes in a GTP-dependent manner. This chain is Elongation factor 4, found in Deinococcus geothermalis (strain DSM 11300 / CIP 105573 / AG-3a).